The following is a 134-amino-acid chain: Small ribosomal subunit protein uS8c (134 aa).

It belongs to the universal ribosomal protein uS8 family. In terms of assembly, part of the 30S ribosomal subunit.

It localises to the plastid. In terms of biological role, one of the primary rRNA binding proteins, it binds directly to 16S rRNA central domain where it helps coordinate assembly of the platform of the 30S subunit. The sequence is that of Small ribosomal subunit protein uS8c (rps8) from Cuscuta reflexa (Southern Asian dodder).